The sequence spans 445 residues: Rab GDP dissociation inhibitor beta (445 aa).

An N-acetylmethionine modification is found at Met1. An N6-succinyllysine modification is found at Lys57. The residue at position 112 (Lys112) is an N6-acetyllysine. At Ser130 the chain carries Phosphoserine. Lys269 carries the N6-acetyllysine modification. Ser382 is modified (phosphoserine).

This sequence belongs to the Rab GDI family. As to quaternary structure, interacts with RHOH. Interacts with the GDP-bound inactive forms of RAB3A, RAB3B, RAB3C, RAB5A, RAB5B, RAB5C, RAB8A, RAB8B, RAB10, RAB12, RAB35, and RAB43; binds RAB3D to a lesser extent. Interacts with DZIP1; this interaction negatively regulates the interaction of GDI2 with GDP-bound RAB8A. As to expression, ubiquitously expressed.

It is found in the cytoplasm. It localises to the membrane. The protein resides in the golgi apparatus. The protein localises to the trans-Golgi network. In terms of biological role, GDP-dissociation inhibitor preventing the GDP to GTP exchange of most Rab proteins. By keeping these small GTPases in their inactive GDP-bound form regulates intracellular membrane trafficking. Negatively regulates protein transport to the cilium and ciliogenesis through the inhibition of RAB8A. The polypeptide is Rab GDP dissociation inhibitor beta (Gdi2) (Rattus norvegicus (Rat)).